The sequence spans 414 residues: 2,3-diketo-5-methylthiopentyl-1-phosphate enolase (414 aa).

Catalysis depends on Lys99, which acts as the Proton acceptor. Substrate-binding positions include Lys148, 174-177, His265, Gly338, and 360-361; these read KDDE and GG. Lys174, Asp176, and Glu177 together coordinate Mg(2+). Residue Lys174 is modified to N6-carboxylysine.

Belongs to the RuBisCO large chain family. Type IV subfamily. In terms of assembly, homodimer. Requires Mg(2+) as cofactor.

It carries out the reaction 5-methylsulfanyl-2,3-dioxopentyl phosphate = 2-hydroxy-5-methylsulfanyl-3-oxopent-1-enyl phosphate. It participates in amino-acid biosynthesis; L-methionine biosynthesis via salvage pathway; L-methionine from S-methyl-5-thio-alpha-D-ribose 1-phosphate: step 3/6. Catalyzes the enolization of 2,3-diketo-5-methylthiopentyl-1-phosphate (DK-MTP-1-P) into 2-hydroxy-3-keto-5-methylthiopentenyl-1-phosphate (HK-MTPenyl-1-P). The sequence is that of 2,3-diketo-5-methylthiopentyl-1-phosphate enolase from Bacillus cereus (strain B4264).